The primary structure comprises 368 residues: Homoserine dehydrogenase (368 aa).

Positions 12, 14, and 15 each coordinate NAD(+). NADP(+) is bound at residue valine 15. Positions 15, 59, 95, 96, and 119 each coordinate NADPH. Threonine 95 lines the NAD(+) pocket. Threonine 95 serves as a coordination point for NADP(+). Lysine 119 is a binding site for NADP(+). Residues glutamate 146, valine 149, alanine 151, and leucine 153 each coordinate Na(+). Positions 209 and 212 each coordinate NADP(+). 2 residues coordinate L-homoserine: glutamate 212 and aspartate 223. The Proton donor role is filled by lysine 227. Glycine 349 is an NAD(+) binding site. An NADP(+)-binding site is contributed by glycine 349. Glycine 349 serves as a coordination point for NADPH.

This sequence belongs to the homoserine dehydrogenase family. A metal cation serves as cofactor.

It carries out the reaction L-homoserine + NADP(+) = L-aspartate 4-semialdehyde + NADPH + H(+). It catalyses the reaction L-homoserine + NAD(+) = L-aspartate 4-semialdehyde + NADH + H(+). The protein operates within amino-acid biosynthesis; L-methionine biosynthesis via de novo pathway; L-homoserine from L-aspartate: step 3/3. It functions in the pathway amino-acid biosynthesis; L-threonine biosynthesis; L-threonine from L-aspartate: step 3/5. Catalyzes the conversion of L-aspartate-beta-semialdehyde (L-Asa) to L-homoserine (L-Hse), the third step in the biosynthesis of amino acids that derive from aspartate (the aspartate family of amino acids), including methioinine and threonine, the latter of which is a precursor to isoleucine; production of homoserine leads to a branch-point in the pathway as it can either be O-phosphorylated for processing to threonine, or O-acylated for processing to methionine. The polypeptide is Homoserine dehydrogenase (Emericella nidulans (strain FGSC A4 / ATCC 38163 / CBS 112.46 / NRRL 194 / M139) (Aspergillus nidulans)).